Reading from the N-terminus, the 647-residue chain is Threonine--tRNA ligase (647 aa).

A TGS domain is found at 1–63 (MDKINITFPD…EEDGSIEIVT (63 aa)). Positions 242-540 (DHRKIGKELD…LTEETKGAFP (299 aa)) are catalytic. Zn(2+) contacts are provided by Cys-336, His-387, and His-517.

It belongs to the class-II aminoacyl-tRNA synthetase family. Homodimer. The cofactor is Zn(2+).

Its subcellular location is the cytoplasm. It catalyses the reaction tRNA(Thr) + L-threonine + ATP = L-threonyl-tRNA(Thr) + AMP + diphosphate + H(+). Catalyzes the attachment of threonine to tRNA(Thr) in a two-step reaction: L-threonine is first activated by ATP to form Thr-AMP and then transferred to the acceptor end of tRNA(Thr). Also edits incorrectly charged L-seryl-tRNA(Thr). The polypeptide is Threonine--tRNA ligase (Staphylococcus carnosus (strain TM300)).